Consider the following 92-residue polypeptide: Small ribosomal subunit protein uS19c (92 aa).

The protein belongs to the universal ribosomal protein uS19 family.

The protein localises to the plastid. Its function is as follows. Protein S19 forms a complex with S13 that binds strongly to the 16S ribosomal RNA. In Cuscuta exaltata (Tall dodder), this protein is Small ribosomal subunit protein uS19c.